A 380-amino-acid chain; its full sequence is MASLRKTHPLLKIANHALVDLPAPSNISVWWNFGSLLGLCLISQILTGLFLAMHYTSDIATAFSSVAHICRDVNYGWLIRNLHANGASFFFICIYLHIGRGLYYGSYLYKETWNIGVVLLLLVMATAFVGYVLPWGQMSFWGATVITNLLSAVPYVGGTLVQWIWGGFSVDNATLTRFFAFHFLLPFIVAAMTMLHLLFLHETGSNNPLGLNSDTDKISFHPYFSYKDLLGFAAVIILLTCLALFTPNLLGDPDNFTPANPLVTPPHIKPEWYFLFAYAILRSIPNKLGGVLALLASILVLMVVPILHTSKQRSLTFRPVTQFLFWALIANVAILTWIGGMPVEDPYIIIGQIASLTYFALFLLIMPMAALVENKVLGWQ.

The next 4 helical transmembrane spans lie at 33–53 (FGSLLGLCLISQILTGLFLAM), 77–98 (WLIRNLHANGASFFFICIYLHI), 113–133 (WNIGVVLLLLVMATAFVGYVL), and 178–198 (FFAFHFLLPFIVAAMTMLHLL). Residues histidine 83 and histidine 97 each coordinate heme b. Positions 182 and 196 each coordinate heme b. A ubiquinone is bound at residue histidine 201. Helical transmembrane passes span 226 to 246 (YKDLLGFAAVIILLTCLALFT), 288 to 308 (LGGVLALLASILVLMVVPILH), 320 to 340 (VTQFLFWALIANVAILTWIGG), and 347 to 367 (YIIIGQIASLTYFALFLLIMP).

The protein belongs to the cytochrome b family. In terms of assembly, the cytochrome bc1 complex contains 3 respiratory subunits (MT-CYB, CYC1 and UQCRFS1), 2 core proteins (UQCRC1 and UQCRC2) and probably 6 low-molecular weight proteins. It depends on heme b as a cofactor.

Its subcellular location is the mitochondrion inner membrane. Functionally, component of the ubiquinol-cytochrome c reductase complex (complex III or cytochrome b-c1 complex) that is part of the mitochondrial respiratory chain. The b-c1 complex mediates electron transfer from ubiquinol to cytochrome c. Contributes to the generation of a proton gradient across the mitochondrial membrane that is then used for ATP synthesis. This is Cytochrome b (mt-cyb) from Pagrus major (Red sea bream).